Here is a 406-residue protein sequence, read N- to C-terminus: Phosphatidylserine decarboxylase proenzyme, mitochondrial (406 aa).

The transit peptide at 1–49 directs the protein to the mitochondrion; it reads MAVAGGRGCVRSLREGVLWRSSPCHCDYTATRHFLGALQKLPLQAWVRK. Topologically, residues 50–60 are mitochondrial matrix; sequence VHTAPLRTLFL. The chain crosses the membrane as a helical span at residues 61-79; that stretch reads LRPVPILLAAGGGYAGYRQ. The Mitochondrial intermembrane portion of the chain corresponds to 80 to 406; it reads YEKYRERQLE…ILFGEALGSL (327 aa). Catalysis depends on charge relay system; for autoendoproteolytic cleavage activity residues Asp188, His264, and Ser375. Ser375 serves as the catalytic Schiff-base intermediate with substrate; via pyruvic acid; for decarboxylase activity. Ser375 carries the pyruvic acid (Ser); by autocatalysis modification.

It belongs to the phosphatidylserine decarboxylase family. PSD-B subfamily. Eukaryotic type I sub-subfamily. In terms of assembly, heterodimer of a large membrane-associated beta subunit and a small pyruvoyl-containing alpha subunit. It depends on pyruvate as a cofactor. In terms of processing, is synthesized initially as an inactive proenzyme. Formation of the active enzyme involves a self-maturation process in which the active site pyruvoyl group is generated from an internal serine residue via an autocatalytic post-translational modification. Two non-identical subunits are generated from the proenzyme in this reaction, and the pyruvate is formed at the N-terminus of the alpha chain, which is derived from the carboxyl end of the proenzyme. The autoendoproteolytic cleavage occurs by a canonical serine protease mechanism, in which the side chain hydroxyl group of the serine supplies its oxygen atom to form the C-terminus of the beta chain, while the remainder of the serine residue undergoes an oxidative deamination to produce ammonia and the pyruvoyl prosthetic group on the alpha chain. During this reaction, the Ser that is part of the protease active site of the proenzyme becomes the pyruvoyl prosthetic group, which constitutes an essential element of the active site of the mature decarboxylase.

The protein resides in the mitochondrion inner membrane. It is found in the cytoplasm. Its subcellular location is the lipid droplet. The catalysed reaction is a 1,2-diacyl-sn-glycero-3-phospho-L-serine + H(+) = a 1,2-diacyl-sn-glycero-3-phosphoethanolamine + CO2. It functions in the pathway phospholipid metabolism; phosphatidylethanolamine biosynthesis. With respect to regulation, inhibited by hydroxylamine. Functionally, catalyzes the formation of phosphatidylethanolamine (PtdEtn) from phosphatidylserine (PtdSer). Plays a central role in phospholipid metabolism and in the interorganelle trafficking of phosphatidylserine. May be involved in lipid droplet biogenesis at the endoplasmic reticulum membrane. The sequence is that of Phosphatidylserine decarboxylase proenzyme, mitochondrial from Rattus norvegicus (Rat).